The primary structure comprises 325 residues: Probable cell division protein WhiA (325 aa).

A DNA-binding region (H-T-H motif) is located at residues 273–306 (SLEELGALADPPLTKDAVAGRIRRLLALADKRAN).

The protein belongs to the WhiA family.

In terms of biological role, involved in cell division and chromosome segregation. The polypeptide is Probable cell division protein WhiA (Frankia alni (strain DSM 45986 / CECT 9034 / ACN14a)).